The following is a 67-amino-acid chain: uncharacterized protein (67 aa).

A helical membrane pass occupies residues 19-39 (ISFIIFFFFYFFFFYFFYGFW).

The protein resides in the membrane. This is an uncharacterized protein from Dictyostelium discoideum (Social amoeba).